The following is a 52-amino-acid chain: SVDCSEYPKPACPKDYRPVCGSDNKTYGNKCNFCNAVVESNGTLTLNRFGKC.

Positions 2 to 52 (VDCSEYPKPACPKDYRPVCGSDNKTYGNKCNFCNAVVESNGTLTLNRFGKC) constitute a Kazal-like domain. 3 disulfides stabilise this stretch: C4/C34, C12/C31, and C20/C52. N-linked (GlcNAc...) asparagine glycosylation is present at N41.

The protein localises to the secreted. The polypeptide is Ovomucoid (Coturnix delegorguei (Harlequin quail)).